A 213-amino-acid polypeptide reads, in one-letter code: Neuroligin-4, X-linked (213 aa).

A disordered region spans residues 1-56; it reads FQYVSTTTKVPPPDMTSFPYGTRRSPAKIWPTTKRPAITPANNPKHSKDPHKTGPE. The Extracellular portion of the chain corresponds to 1–73; sequence FQYVSTTTKV…TKRDYSTELS (73 aa). A compositionally biased stretch (basic and acidic residues) spans 46-55; that stretch reads HSKDPHKTGP. Residues 74 to 94 form a helical membrane-spanning segment; the sequence is VTIAVGASLLFLNILAFAALY. Topologically, residues 95–213 are cytoplasmic; sequence YKKDKRRHET…LPHGHSTTRV (119 aa). Phosphoserine is present on Ser-109.

Belongs to the type-B carboxylesterase/lipase family. Homodimer. Interacts with NRXN1 in a calcium-dependent manner. Interaction with neurexins is mediated by heparan sulfate glycan modification on neurexin. Interacts through its C-terminus with DLG4/PSD-95 third PDZ domain.

The protein localises to the cell membrane. Its subcellular location is the postsynaptic density membrane. Functionally, cell surface protein involved in cell-cell-interactions via its interactions with neurexin family members. The chain is Neuroligin-4, X-linked (NLGN4X) from Macaca mulatta (Rhesus macaque).